Here is a 289-residue protein sequence, read N- to C-terminus: Digeranylgeranylglyceryl phosphate synthase (289 aa).

8 helical membrane-spanning segments follow: residues 18–38 (LMAG…LISG), 47–67 (AFPF…SGAG), 99–119 (FYFS…INSI), 120–140 (CGSI…TLKG), 163–183 (IFGF…ALAI), 218–238 (LAVL…FMSV), 243–263 (YIYL…QLLV), and 269–289 (KSSK…IAGV).

The protein belongs to the UbiA prenyltransferase family. DGGGP synthase subfamily. Requires Mg(2+) as cofactor.

It localises to the cell membrane. It carries out the reaction sn-3-O-(geranylgeranyl)glycerol 1-phosphate + (2E,6E,10E)-geranylgeranyl diphosphate = 2,3-bis-O-(geranylgeranyl)-sn-glycerol 1-phosphate + diphosphate. It participates in membrane lipid metabolism; glycerophospholipid metabolism. In terms of biological role, prenyltransferase that catalyzes the transfer of the geranylgeranyl moiety of geranylgeranyl diphosphate (GGPP) to the C2 hydroxyl of (S)-3-O-geranylgeranylglyceryl phosphate (GGGP). This reaction is the second ether-bond-formation step in the biosynthesis of archaeal membrane lipids. The protein is Digeranylgeranylglyceryl phosphate synthase of Methanosarcina mazei (strain ATCC BAA-159 / DSM 3647 / Goe1 / Go1 / JCM 11833 / OCM 88) (Methanosarcina frisia).